The following is a 200-amino-acid chain: Probable molybdenum cofactor guanylyltransferase (200 aa).

GTP-binding positions include 9 to 11 (LAG), K21, D69, and D100. D100 serves as a coordination point for Mg(2+).

Belongs to the MobA family. Requires Mg(2+) as cofactor.

It is found in the cytoplasm. The enzyme catalyses Mo-molybdopterin + GTP + H(+) = Mo-molybdopterin guanine dinucleotide + diphosphate. Transfers a GMP moiety from GTP to Mo-molybdopterin (Mo-MPT) cofactor (Moco or molybdenum cofactor) to form Mo-molybdopterin guanine dinucleotide (Mo-MGD) cofactor. In Bacillus cereus (strain ZK / E33L), this protein is Probable molybdenum cofactor guanylyltransferase.